The following is a 336-amino-acid chain: Calcium-gated potassium channel MthK (336 aa).

At 1 to 20 (MVLVIEIIRKHLPRVLKVPA) the chain is on the cytoplasmic side. A helical transmembrane segment spans residues 21–41 (TRILLLVLAVIIYGTAGFHFI). Residues 42 to 48 (EGESWTV) are Extracellular-facing. Positions 49 to 58 (SLYWTFVTIA) form an intramembrane region, helical; Pore-forming. The pore-forming intramembrane region spans 59–64 (TVGYGD). The Selectivity filter motif lies at 59–64 (TVGYGD). Residues 65 to 69 (YSPST) lie on the Extracellular side of the membrane. The helical transmembrane segment at 70–95 (PLGMYFTVTLIVLGIGTFAVAVERLL) threads the bilayer. Over 96–106 (EFLINREQMKL) the chain is Cytoplasmic. Residues 115-230 (SRHVVICGWS…RMAGADQVIS (116 aa)) enclose the RCK N-terminal domain. Residues aspartate 184, glutamate 210, and glutamate 212 each coordinate Ca(2+). In terms of domain architecture, RCK C-terminal spans 252–336 (VQDVLAEEST…IERLKNYISA (85 aa)).

As to quaternary structure, homotetramer.

It localises to the cell membrane. Its function is as follows. Calcium-gated potassium channel. This Methanothermobacter thermautotrophicus (strain ATCC 29096 / DSM 1053 / JCM 10044 / NBRC 100330 / Delta H) (Methanobacterium thermoautotrophicum) protein is Calcium-gated potassium channel MthK (mthK).